The chain runs to 161 residues: Nucleotide-binding protein Bphy_0527 (161 aa).

This sequence belongs to the YajQ family.

Its function is as follows. Nucleotide-binding protein. This Paraburkholderia phymatum (strain DSM 17167 / CIP 108236 / LMG 21445 / STM815) (Burkholderia phymatum) protein is Nucleotide-binding protein Bphy_0527.